Consider the following 373-residue polypeptide: Transaldolase (373 aa).

Lys-143 acts as the Schiff-base intermediate with substrate in catalysis.

The protein belongs to the transaldolase family. Type 2 subfamily.

It localises to the cytoplasm. It carries out the reaction D-sedoheptulose 7-phosphate + D-glyceraldehyde 3-phosphate = D-erythrose 4-phosphate + beta-D-fructose 6-phosphate. The protein operates within carbohydrate degradation; pentose phosphate pathway; D-glyceraldehyde 3-phosphate and beta-D-fructose 6-phosphate from D-ribose 5-phosphate and D-xylulose 5-phosphate (non-oxidative stage): step 2/3. Its function is as follows. Transaldolase is important for the balance of metabolites in the pentose-phosphate pathway. This is Transaldolase from Mycobacterium ulcerans (strain Agy99).